We begin with the raw amino-acid sequence, 182 residues long: Translation initiation factor IF-3 (182 aa).

This sequence belongs to the IF-3 family. As to quaternary structure, monomer.

The protein resides in the cytoplasm. Functionally, IF-3 binds to the 30S ribosomal subunit and shifts the equilibrium between 70S ribosomes and their 50S and 30S subunits in favor of the free subunits, thus enhancing the availability of 30S subunits on which protein synthesis initiation begins. In Tropheryma whipplei (strain TW08/27) (Whipple's bacillus), this protein is Translation initiation factor IF-3.